The chain runs to 569 residues: Protein Noxp20 (569 aa).

3 disordered regions span residues 1-87 (MSDD…GEVT), 102-126 (GDTG…QAGR), and 165-208 (ANSA…GSRG). Residue Thr197 is modified to Phosphothreonine. Phosphoserine is present on Ser262. Positions 404–439 (VSIDVAKGSEEEEKEEGKEEKAEEPEEDKTGGQGAK) are disordered.

It belongs to the FAM114 family. In terms of tissue distribution, over-expressed in brain. Also detected in lung, stomach, and in a lower extent in testis and thymus.

The protein resides in the cytoplasm. Functionally, may play a role in neuronal cell development. The sequence is that of Protein Noxp20 (Fam114a1) from Mus musculus (Mouse).